The primary structure comprises 100 residues: Probable steroid-binding protein 3 (100 aa).

M1 is subject to N-acetylmethionine. In terms of domain architecture, Cytochrome b5 heme-binding spans 1-82 (MEFTAEQLSQ…LTEKEINTLN (82 aa)). Residues 1–82 (MEFTAEQLSQ…LTEKEINTLN (82 aa)) are sterol-binding.

The protein belongs to the cytochrome b5 family. MAPR subfamily.

It is found in the nucleus. The chain is Probable steroid-binding protein 3 (MP3) from Arabidopsis thaliana (Mouse-ear cress).